The primary structure comprises 651 residues: Chaperone protein HtpG (651 aa).

Positions 1–353 are a; substrate-binding; sequence MAPHVEQLEF…AQDMSLNVSR (353 aa). The b stretch occupies residues 354-569; the sequence is EILQQDRQIR…TFGITPALAR (216 aa). The tract at residues 570–651 is c; that stretch reads MYRASGQPVP…RLTRMVGEQS (82 aa).

The protein belongs to the heat shock protein 90 family. As to quaternary structure, homodimer.

The protein localises to the cytoplasm. In terms of biological role, molecular chaperone. Has ATPase activity. This is Chaperone protein HtpG from Mycolicibacterium gilvum (strain PYR-GCK) (Mycobacterium gilvum (strain PYR-GCK)).